A 414-amino-acid polypeptide reads, in one-letter code: Ornithine aminotransferase (414 aa).

A disulfide bond links Cys-154 and Cys-163. Lys-262 carries the N6-(pyridoxal phosphate)lysine modification.

It belongs to the class-III pyridoxal-phosphate-dependent aminotransferase family. As to quaternary structure, homodimer. Pyridoxal 5'-phosphate serves as cofactor. The disulfide bond between Cys-154 and Cys-163 is reduced by TRX1 which increases OAT catalytic activity.

The protein localises to the cytoplasm. The catalysed reaction is a 2-oxocarboxylate + L-ornithine = L-glutamate 5-semialdehyde + an L-alpha-amino acid. It catalyses the reaction L-ornithine + 2-oxoglutarate = L-glutamate 5-semialdehyde + L-glutamate. It functions in the pathway amino-acid biosynthesis; L-proline biosynthesis; L-glutamate 5-semialdehyde from L-ornithine: step 1/1. Unlike for mammalian OATs, activity is increased by TRX1-mediated reduction of the disulfide bond between Cys-154 and Cys-163. Binding to TRX1 may also induce conformational changes that facilitate substrate binding. In terms of biological role, catalyzes the transamination of alpha-ketoglutarate with ornithine or N-acetylornithine and of glutamate-5-semialdehyde with glutamate and alanine. This Plasmodium yoelii yoelii protein is Ornithine aminotransferase.